The sequence spans 376 residues: Putative transcription factor egl-18 (376 aa).

Disordered regions lie at residues 1-33 (MSISIMTETRPESAEQQHHEVLQRPSDEPCSGC), 65-122 (NNEL…LPDF), 148-197 (MVQQ…SDIP), and 240-264 (ATPSSQSQDSSMFEKTETSGDPNAA). The segment covering 9-27 (TRPESAEQQHHEVLQRPSD) has biased composition (basic and acidic residues). 2 stretches are compositionally biased toward low complexity: residues 68 to 89 (LKSSSVSSGKASPSPAESRSSP) and 165 to 175 (QQSVSPPQSKS). The segment covering 176–195 (VKIEDPMDQDVKQEESERSD) has biased composition (basic and acidic residues). Over residues 241–250 (TPSSQSQDSS) the composition is skewed to polar residues. The segment at 266–290 (CSNCRTDKTTAWRRDAEGKLVCNPC) adopts a GATA-type zinc-finger fold.

In terms of tissue distribution, expressed in differentiated seam cells. Expressed in the head and trunk.

The protein resides in the nucleus. Its function is as follows. Probable transcription factor. Involved in embryonic development and in vulval development in larvae, acting redundantly, at least in part, with elt-6. Perhaps acting together with elt-6, may form a positive feedback loop to initiate and maintain lin-39 gene expression to ensure proper vulval precursor cell (VPC) fate specification. Together with elt-6, acts as a downstream target of the Wnt/beta-catenin asymmetry pathway, required to adopt or maintain the seam cell fate. Required in seam cells, acting redundantly with elt-6, to promote production of alae, expression of several seam-specific genes and maintenance of seam cells in an unfused state. Plays a role in longevity. May form a transcriptional circuit with GATA factors elt-3 and elt-6. The chain is Putative transcription factor egl-18 from Caenorhabditis elegans.